We begin with the raw amino-acid sequence, 302 residues long: N-acetylmuramic acid 6-phosphate etherase (302 aa).

The 164-residue stretch at 58 to 221 (IGESFLNGGR…STGAMVKTGK (164 aa)) folds into the SIS domain. Catalysis depends on E86, which acts as the Proton donor. E117 is a catalytic residue.

Belongs to the GCKR-like family. MurNAc-6-P etherase subfamily. Homodimer.

It carries out the reaction N-acetyl-D-muramate 6-phosphate + H2O = N-acetyl-D-glucosamine 6-phosphate + (R)-lactate. It participates in amino-sugar metabolism; N-acetylmuramate degradation. In terms of biological role, specifically catalyzes the cleavage of the D-lactyl ether substituent of MurNAc 6-phosphate, producing GlcNAc 6-phosphate and D-lactate. In Clostridium botulinum (strain Okra / Type B1), this protein is N-acetylmuramic acid 6-phosphate etherase.